A 179-amino-acid chain; its full sequence is tRNA-splicing endonuclease (179 aa).

Catalysis depends on residues Y115, H125, and K156.

The protein belongs to the tRNA-intron endonuclease family. Archaeal short subfamily. In terms of assembly, homotetramer; although the tetramer contains four active sites, only two participate in the cleavage. Therefore, it should be considered as a dimer of dimers.

The enzyme catalyses pretRNA = a 3'-half-tRNA molecule with a 5'-OH end + a 5'-half-tRNA molecule with a 2',3'-cyclic phosphate end + an intron with a 2',3'-cyclic phosphate and a 5'-hydroxyl terminus.. Endonuclease that removes tRNA introns. Cleaves pre-tRNA at the 5'- and 3'-splice sites to release the intron. The products are an intron and two tRNA half-molecules bearing 2',3' cyclic phosphate and 5'-OH termini. Recognizes a pseudosymmetric substrate in which 2 bulged loops of 3 bases are separated by a stem of 4 bp. The polypeptide is tRNA-splicing endonuclease (endA) (Methanocaldococcus jannaschii (strain ATCC 43067 / DSM 2661 / JAL-1 / JCM 10045 / NBRC 100440) (Methanococcus jannaschii)).